We begin with the raw amino-acid sequence, 288 residues long: Phospholipid phosphatase 2 (288 aa).

The Cytoplasmic segment spans residues 1 to 4 (MQRR). Residues 5-25 (WVFVLLDVLCLLVASLPFAIL) form a helical membrane-spanning segment. Residues 26 to 51 (TLVNAPYKRGFYCGDDSIRYPYRPDT) lie on the Lumenal side of the membrane. The helical transmembrane segment at 52 to 72 (ITHGLMAGVTITATVILVSAG) threads the bilayer. Residues 73–87 (EAYLVYTDRLYSRSD) are Cytoplasmic-facing. Residues 88-108 (FNNYVAAVYKVLGTFLFGAAV) traverse the membrane as a helical segment. Residues 109 to 162 (SQSLTDLAKYMIGRLRPNFLAVCDPDWSRVNCSVYVQLEKVCRGNPADVTEARL) are Lumenal-facing. The phosphatase sequence motif I stretch occupies residues 117–125 (KYMIGRLRP). A glycan (N-linked (GlcNAc...) asparagine) is linked at Asn-139. Residues 163 to 183 (SFYSGHSSFGMYCMVFLALYV) traverse the membrane as a helical segment. Positions 165–168 (YSGH) are phosphatase sequence motif II. Residue His-168 is the Proton donors of the active site. Over 184–196 (QARLCWKWARLLR) the chain is Cytoplasmic. Residues 197–217 (PTVQFFLVAFALYVGYTRVSD) form a helical membrane-spanning segment. The tract at residues 213–224 (TRVSDYKHHWSD) is phosphatase sequence motif III. Topologically, residues 218–226 (YKHHWSDVL) are lumenal. The Nucleophile role is filled by His-220. Residues 227-247 (VGLLQGALVAALTVCYISDFF) traverse the membrane as a helical segment. Topologically, residues 248–288 (KARPPQHCLKEEELERKPSLSLTLTLGEADHNHYGYPHSSS) are cytoplasmic.

This sequence belongs to the PA-phosphatase related phosphoesterase family. In terms of assembly, forms functional homodimers and homooligomers. Can also form heterooligomers with PLPP1 and PLPP3. In terms of processing, N-glycosylated. Found mainly in brain, pancreas and placenta.

Its subcellular location is the membrane. The protein resides in the cell membrane. The protein localises to the early endosome membrane. It is found in the endoplasmic reticulum membrane. The enzyme catalyses a 1,2-diacyl-sn-glycero-3-phosphate + H2O = a 1,2-diacyl-sn-glycerol + phosphate. It carries out the reaction 1,2-dihexadecanoyl-sn-glycero-3-phosphate + H2O = 1,2-dihexadecanoyl-sn-glycerol + phosphate. The catalysed reaction is 1,2-di-(9Z-octadecenoyl)-sn-glycero-3-phosphate + H2O = 1,2-di-(9Z-octadecenoyl)-sn-glycerol + phosphate. It catalyses the reaction a monoacyl-sn-glycero-3-phosphate + H2O = a monoacylglycerol + phosphate. The enzyme catalyses (9Z)-octadecenoyl-sn-glycero-3-phosphate + H2O = (9Z-octadecenoyl)-glycerol + phosphate. It carries out the reaction sphing-4-enine 1-phosphate + H2O = sphing-4-enine + phosphate. The catalysed reaction is an N-acylsphing-4-enine 1-phosphate + H2O = an N-acylsphing-4-enine + phosphate. It catalyses the reaction N-(octanoyl)-sphing-4-enine-1-phosphate + H2O = N-octanoylsphing-4-enine + phosphate. The enzyme catalyses N-(9Z-octadecenoyl)-ethanolamine phosphate + H2O = N-(9Z-octadecenoyl) ethanolamine + phosphate. Its pathway is lipid metabolism; phospholipid metabolism. Its activity is regulated as follows. Magnesium-independent phospholipid phosphatase. Insensitive to N-ethylmaleimide. Inhibited by sphingosine, zinc ions and modestly by propanolol. Magnesium-independent phospholipid phosphatase that catalyzes the dephosphorylation of a variety of glycerolipid and sphingolipid phosphate esters including phosphatidate/PA, lysophosphatidate/LPA, sphingosine 1-phosphate/S1P and ceramide 1-phosphate/C1P. Has no apparent extracellular phosphatase activity and therefore most probably acts intracellularly. Also acts on N-oleoyl ethanolamine phosphate/N-(9Z-octadecenoyl)-ethanolamine phosphate, a potential physiological compound. Through dephosphorylation of these bioactive lipid mediators produces new bioactive compounds and may regulate signal transduction in different cellular processes. Indirectly regulates, for instance, cell cycle G1/S phase transition through its phospholipid phosphatase activity. This Homo sapiens (Human) protein is Phospholipid phosphatase 2.